The chain runs to 230 residues: Uracil phosphoribosyltransferase (230 aa).

Residue 38-42 coordinates GTP; sequence KGLVK. Residues Arg-87, Arg-112, and 140-148 each bind 5-phospho-alpha-D-ribose 1-diphosphate; that span reads DPMIATGST. Uracil-binding positions include Ile-204 and 209–211; that span reads GDA. A 5-phospho-alpha-D-ribose 1-diphosphate-binding site is contributed by Asp-210.

Belongs to the UPRTase family. Mg(2+) is required as a cofactor.

It catalyses the reaction UMP + diphosphate = 5-phospho-alpha-D-ribose 1-diphosphate + uracil. The protein operates within pyrimidine metabolism; UMP biosynthesis via salvage pathway; UMP from uracil: step 1/1. Allosterically activated by GTP. Its function is as follows. Catalyzes the conversion of uracil and 5-phospho-alpha-D-ribose 1-diphosphate (PRPP) to UMP and diphosphate. The sequence is that of Uracil phosphoribosyltransferase from Thermococcus kodakarensis (strain ATCC BAA-918 / JCM 12380 / KOD1) (Pyrococcus kodakaraensis (strain KOD1)).